The following is a 209-amino-acid chain: Imidazoleglycerol-phosphate dehydratase (209 aa).

This sequence belongs to the imidazoleglycerol-phosphate dehydratase family.

Its subcellular location is the cytoplasm. It catalyses the reaction D-erythro-1-(imidazol-4-yl)glycerol 3-phosphate = 3-(imidazol-4-yl)-2-oxopropyl phosphate + H2O. The protein operates within amino-acid biosynthesis; L-histidine biosynthesis; L-histidine from 5-phospho-alpha-D-ribose 1-diphosphate: step 6/9. This chain is Imidazoleglycerol-phosphate dehydratase, found in Prochlorococcus marinus (strain MIT 9313).